The sequence spans 884 residues: Probable leucine-rich repeat receptor-like protein kinase At2g28990 (884 aa).

The first 19 residues, Met1–Ala19, serve as a signal peptide directing secretion. Residues Gln20–Pro508 are Extracellular-facing. N-linked (GlcNAc...) asparagine glycosylation is found at Asn70, Asn177, Asn217, Asn231, Asn251, Asn284, Asn298, Asn334, Asn418, Asn427, Asn438, Asn459, and Asn464. 3 LRR repeats span residues Ser404–Asn427, Phe428–Asn451, and Met452–Lys476. A helical membrane pass occupies residues Val509 to Phe529. Over Arg530–Arg884 the chain is Cytoplasmic. A disordered region spans residues Ser535–Ser559. The segment covering Pro546 to Ser559 has biased composition (polar residues). Thr568 is modified (phosphothreonine). A Protein kinase domain is found at Asn577–Leu850. Residues Leu583–Val591 and Lys605 each bind ATP. Phosphotyrosine is present on Tyr650. Residue Asp702 is the Proton acceptor of the active site. A Phosphoserine modification is found at Ser736. 2 positions are modified to phosphothreonine: Thr737 and Thr742. Tyr750 carries the post-translational modification Phosphotyrosine.

It belongs to the protein kinase superfamily. Ser/Thr protein kinase family. In terms of assembly, binds to the ammonium transporter AMT1-1.

It localises to the membrane. The enzyme catalyses L-seryl-[protein] + ATP = O-phospho-L-seryl-[protein] + ADP + H(+). The catalysed reaction is L-threonyl-[protein] + ATP = O-phospho-L-threonyl-[protein] + ADP + H(+). This chain is Probable leucine-rich repeat receptor-like protein kinase At2g28990, found in Arabidopsis thaliana (Mouse-ear cress).